The following is a 433-amino-acid chain: GTPase Der (433 aa).

EngA-type G domains are found at residues 5 to 167 (KKVL…GEVG) and 174 to 349 (IKVG…DQLE). Residues 11–18 (GRPNVGKS), 58–62 (DTGGF), 119–122 (NKVD), 180–187 (GKPNSGKS), 227–231 (DTAGI), and 292–295 (SKWD) contribute to the GTP site. Positions 349-429 (ELKTSTPDLN…PILVELKEKI (81 aa)) constitute a KH-like domain.

It belongs to the TRAFAC class TrmE-Era-EngA-EngB-Septin-like GTPase superfamily. EngA (Der) GTPase family. As to quaternary structure, associates with the 50S ribosomal subunit.

GTPase that plays an essential role in the late steps of ribosome biogenesis. In Borreliella burgdorferi (strain ATCC 35210 / DSM 4680 / CIP 102532 / B31) (Borrelia burgdorferi), this protein is GTPase Der.